The following is a 50-amino-acid chain: Large ribosomal subunit protein bL33 (50 aa).

This sequence belongs to the bacterial ribosomal protein bL33 family.

The protein is Large ribosomal subunit protein bL33 of Sulfurimonas denitrificans (strain ATCC 33889 / DSM 1251) (Thiomicrospira denitrificans (strain ATCC 33889 / DSM 1251)).